Consider the following 352-residue polypeptide: CRISPR-associated endonuclease Cas1 1 (352 aa).

Mn(2+) contacts are provided by glutamate 207, histidine 274, and glutamate 289.

It belongs to the CRISPR-associated endonuclease Cas1 family. Homodimer, forms a heterotetramer with a Cas2 homodimer. Requires Mg(2+) as cofactor. It depends on Mn(2+) as a cofactor.

In terms of biological role, CRISPR (clustered regularly interspaced short palindromic repeat), is an adaptive immune system that provides protection against mobile genetic elements (viruses, transposable elements and conjugative plasmids). CRISPR clusters contain spacers, sequences complementary to antecedent mobile elements, and target invading nucleic acids. CRISPR clusters are transcribed and processed into CRISPR RNA (crRNA). Acts as a dsDNA endonuclease. Involved in the integration of spacer DNA into the CRISPR cassette. This is CRISPR-associated endonuclease Cas1 1 from Saccharolobus solfataricus (strain ATCC 35092 / DSM 1617 / JCM 11322 / P2) (Sulfolobus solfataricus).